The sequence spans 339 residues: Ketol-acid reductoisomerase (NADP(+)) (339 aa).

The region spanning 1-182 (MRVYYDRDAD…GGGRSGIIET (182 aa)) is the KARI N-terminal Rossmann domain. NADP(+) is bound by residues 24–27 (YGSQ), R48, S51, T53, and 83–86 (DEHQ). Residue H108 is part of the active site. NADP(+) is bound at residue G134. Positions 183–328 (NFREECETDL…ARLRGMMPWI (146 aa)) constitute a KARI C-terminal knotted domain. Mg(2+) is bound by residues D191, E195, E227, and E231. S252 provides a ligand contact to substrate.

Belongs to the ketol-acid reductoisomerase family. The cofactor is Mg(2+).

It carries out the reaction (2R)-2,3-dihydroxy-3-methylbutanoate + NADP(+) = (2S)-2-acetolactate + NADPH + H(+). The catalysed reaction is (2R,3R)-2,3-dihydroxy-3-methylpentanoate + NADP(+) = (S)-2-ethyl-2-hydroxy-3-oxobutanoate + NADPH + H(+). The protein operates within amino-acid biosynthesis; L-isoleucine biosynthesis; L-isoleucine from 2-oxobutanoate: step 2/4. It participates in amino-acid biosynthesis; L-valine biosynthesis; L-valine from pyruvate: step 2/4. Its function is as follows. Involved in the biosynthesis of branched-chain amino acids (BCAA). Catalyzes an alkyl-migration followed by a ketol-acid reduction of (S)-2-acetolactate (S2AL) to yield (R)-2,3-dihydroxy-isovalerate. In the isomerase reaction, S2AL is rearranged via a Mg-dependent methyl migration to produce 3-hydroxy-3-methyl-2-ketobutyrate (HMKB). In the reductase reaction, this 2-ketoacid undergoes a metal-dependent reduction by NADPH to yield (R)-2,3-dihydroxy-isovalerate. This Caulobacter sp. (strain K31) protein is Ketol-acid reductoisomerase (NADP(+)).